The chain runs to 126 residues: Glycine cleavage system H protein (126 aa).

A Lipoyl-binding domain is found at 23 to 105 (AATVGITDHA…YGEGWLLRVR (83 aa)). Lysine 64 carries the N6-lipoyllysine modification.

This sequence belongs to the GcvH family. In terms of assembly, the glycine cleavage system is composed of four proteins: P, T, L and H. (R)-lipoate serves as cofactor.

Its function is as follows. The glycine cleavage system catalyzes the degradation of glycine. The H protein shuttles the methylamine group of glycine from the P protein to the T protein. In Rubrobacter xylanophilus (strain DSM 9941 / JCM 11954 / NBRC 16129 / PRD-1), this protein is Glycine cleavage system H protein.